The primary structure comprises 632 residues: tRNA uridine 5-carboxymethylaminomethyl modification enzyme MnmG (632 aa).

Residues 15 to 20, Ile-127, and Ser-182 each bind FAD; that span reads GAGHAG. 276–290 is an NAD(+) binding site; it reads GPRYCPSIEDKIVRF. Gln-373 contributes to the FAD binding site.

Belongs to the MnmG family. In terms of assembly, homodimer. Heterotetramer of two MnmE and two MnmG subunits. The cofactor is FAD.

The protein localises to the cytoplasm. NAD-binding protein involved in the addition of a carboxymethylaminomethyl (cmnm) group at the wobble position (U34) of certain tRNAs, forming tRNA-cmnm(5)s(2)U34. The protein is tRNA uridine 5-carboxymethylaminomethyl modification enzyme MnmG of Streptococcus pyogenes serotype M6 (strain ATCC BAA-946 / MGAS10394).